The sequence spans 314 residues: Homoserine kinase (314 aa).

An ATP-binding site is contributed by 95–105 (PHSRGLGSSAA).

It belongs to the GHMP kinase family. Homoserine kinase subfamily.

It is found in the cytoplasm. The catalysed reaction is L-homoserine + ATP = O-phospho-L-homoserine + ADP + H(+). It functions in the pathway amino-acid biosynthesis; L-threonine biosynthesis; L-threonine from L-aspartate: step 4/5. Catalyzes the ATP-dependent phosphorylation of L-homoserine to L-homoserine phosphate. In Mycobacterium sp. (strain KMS), this protein is Homoserine kinase.